A 306-amino-acid polypeptide reads, in one-letter code: Acyl transferase (306 aa).

Active-site charge relay system residues include serine 117, aspartate 214, and histidine 244.

Belongs to the LuxD family.

Its pathway is lipid metabolism; fatty acid reduction for biolumincescence. Acyl transferase is part of the fatty acid reductase system required for aldehyde biosynthesis; it produces fatty acids for the luminescent reaction. The protein is Acyl transferase of Photobacterium phosphoreum.